Reading from the N-terminus, the 1395-residue chain is DNA-directed RNA polymerase subunit beta' (1395 aa).

The Zn(2+) site is built by C70, C72, C85, and C88. Mg(2+) contacts are provided by D470, D472, and D474. Residues C815, C889, C896, and C899 each coordinate Zn(2+).

It belongs to the RNA polymerase beta' chain family. In terms of assembly, the RNAP catalytic core consists of 2 alpha, 1 beta, 1 beta' and 1 omega subunit. When a sigma factor is associated with the core the holoenzyme is formed, which can initiate transcription. Mg(2+) serves as cofactor. Requires Zn(2+) as cofactor.

It catalyses the reaction RNA(n) + a ribonucleoside 5'-triphosphate = RNA(n+1) + diphosphate. In terms of biological role, DNA-dependent RNA polymerase catalyzes the transcription of DNA into RNA using the four ribonucleoside triphosphates as substrates. This chain is DNA-directed RNA polymerase subunit beta', found in Anaeromyxobacter sp. (strain Fw109-5).